We begin with the raw amino-acid sequence, 108 residues long: Large ribosomal subunit protein uL24 (108 aa).

The protein belongs to the universal ribosomal protein uL24 family. In terms of assembly, part of the 50S ribosomal subunit.

In terms of biological role, one of two assembly initiator proteins, it binds directly to the 5'-end of the 23S rRNA, where it nucleates assembly of the 50S subunit. One of the proteins that surrounds the polypeptide exit tunnel on the outside of the subunit. This chain is Large ribosomal subunit protein uL24, found in Salinispora tropica (strain ATCC BAA-916 / DSM 44818 / JCM 13857 / NBRC 105044 / CNB-440).